The primary structure comprises 190 residues: Xanthine phosphoribosyltransferase (190 aa).

Xanthine is bound by residues leucine 20 and asparagine 27. 128–132 (ANGEA) is a 5-phospho-alpha-D-ribose 1-diphosphate binding site. Residue lysine 156 participates in xanthine binding.

The protein belongs to the purine/pyrimidine phosphoribosyltransferase family. Xpt subfamily. Homodimer.

It is found in the cytoplasm. It catalyses the reaction XMP + diphosphate = xanthine + 5-phospho-alpha-D-ribose 1-diphosphate. It functions in the pathway purine metabolism; XMP biosynthesis via salvage pathway; XMP from xanthine: step 1/1. Functionally, converts the preformed base xanthine, a product of nucleic acid breakdown, to xanthosine 5'-monophosphate (XMP), so it can be reused for RNA or DNA synthesis. This Clostridium botulinum (strain Eklund 17B / Type B) protein is Xanthine phosphoribosyltransferase.